The sequence spans 116 residues: Immunoglobulin heavy variable 3-66 (116 aa).

Positions 1–19 are cleaved as a signal peptide; that stretch reads MEFGLSWVFLVAILKGVQC. A framework-1 region spans residues 20–44; it reads EVQLVESGGGLIQPGGSLRLSCAAS. The Ig-like domain maps to 20-116; it reads EVQLVESGGG…EDTAVYYCAR (97 aa). Cysteines 41 and 114 form a disulfide. The interval 45-52 is complementarity-determining-1; it reads GFTVSSNY. The segment at 53-69 is framework-2; that stretch reads MSWVRQAPGKGLEWVSV. Residues 70–76 are complementarity-determining-2; it reads IYSCGST. Residues 77–114 are framework-3; the sequence is YYADSVKGRFTISRDNSKNTLYLQMNSLRAEDTAVYYC. Positions 115-116 are complementarity-determining-3; it reads AR.

Immunoglobulins are composed of two identical heavy chains and two identical light chains; disulfide-linked.

It is found in the secreted. It localises to the cell membrane. V region of the variable domain of immunoglobulin heavy chains that participates in the antigen recognition. Immunoglobulins, also known as antibodies, are membrane-bound or secreted glycoproteins produced by B lymphocytes. In the recognition phase of humoral immunity, the membrane-bound immunoglobulins serve as receptors which, upon binding of a specific antigen, trigger the clonal expansion and differentiation of B lymphocytes into immunoglobulins-secreting plasma cells. Secreted immunoglobulins mediate the effector phase of humoral immunity, which results in the elimination of bound antigens. The antigen binding site is formed by the variable domain of one heavy chain, together with that of its associated light chain. Thus, each immunoglobulin has two antigen binding sites with remarkable affinity for a particular antigen. The variable domains are assembled by a process called V-(D)-J rearrangement and can then be subjected to somatic hypermutations which, after exposure to antigen and selection, allow affinity maturation for a particular antigen. This is Immunoglobulin heavy variable 3-66 from Homo sapiens (Human).